The sequence spans 329 residues: Malate dehydrogenase (329 aa).

11 to 17 (GAAGQIG) provides a ligand contact to NAD(+). The substrate site is built by Arg92 and Arg98. NAD(+) contacts are provided by residues Asn105, Gln112, and 129 to 131 (VGN). Residues Asn131 and Arg165 each contribute to the substrate site. Residue His190 is the Proton acceptor of the active site.

Belongs to the LDH/MDH superfamily. MDH type 2 family.

The catalysed reaction is (S)-malate + NAD(+) = oxaloacetate + NADH + H(+). In terms of biological role, catalyzes the reversible oxidation of malate to oxaloacetate. This is Malate dehydrogenase from Laribacter hongkongensis (strain HLHK9).